The following is a 134-amino-acid chain: Profilin-2 (134 aa).

Thr114 carries the phosphothreonine modification.

The protein belongs to the profilin family. In terms of assembly, occurs in many kinds of cells as a complex with monomeric actin in a 1:1 ratio. Phosphorylated by MAP kinases.

It localises to the cytoplasm. It is found in the cytoskeleton. Binds to actin and affects the structure of the cytoskeleton. At high concentrations, profilin prevents the polymerization of actin, whereas it enhances it at low concentrations. By binding to PIP2, it inhibits the formation of IP3 and DG. The sequence is that of Profilin-2 (PRO2) from Nicotiana tabacum (Common tobacco).